Consider the following 121-residue polypeptide: Large-conductance mechanosensitive channel (121 aa).

2 consecutive transmembrane segments (helical) span residues 14 to 34 (VLDL…VKSL) and 67 to 87 (GAFL…FVLI).

Belongs to the MscL family. In terms of assembly, homopentamer.

It localises to the cell membrane. Functionally, channel that opens in response to stretch forces in the membrane lipid bilayer. May participate in the regulation of osmotic pressure changes within the cell. This is Large-conductance mechanosensitive channel from Lactococcus lactis subsp. cremoris (strain SK11).